Here is a 529-residue protein sequence, read N- to C-terminus: 56 kDa type-specific antigen (529 aa).

A signal peptide spans 1–22; that stretch reads MKKIMLIASAMSALSLPFSASA. A helical membrane pass occupies residues 67–87; the sequence is LTTSMPFGGTLAAGMTIAPGF. The span at 106–116 shows a compositional bias: basic and acidic residues; it reads GKTGSDADIRS. Disordered regions lie at residues 106 to 134 and 392 to 424; these read GKTG…PQPT and DGGC…KGKE. A helical membrane pass occupies residues 477-492; that stretch reads TGMVASGALGVAINAA.

The protein resides in the cell membrane. In terms of biological role, may be an adherent factor for rickettsial adsorption to the host-cell surface and a determinant of virulence of individual rickettsial strain. It is the major outer membrane protein. The polypeptide is 56 kDa type-specific antigen (Orientia tsutsugamushi (Rickettsia tsutsugamushi)).